Here is a 208-residue protein sequence, read N- to C-terminus: ATP-dependent Clp protease proteolytic subunit (208 aa).

Residue S111 is the Nucleophile of the active site. H136 is an active-site residue.

Belongs to the peptidase S14 family. Fourteen ClpP subunits assemble into 2 heptameric rings which stack back to back to give a disk-like structure with a central cavity, resembling the structure of eukaryotic proteasomes.

Its subcellular location is the cytoplasm. It carries out the reaction Hydrolysis of proteins to small peptides in the presence of ATP and magnesium. alpha-casein is the usual test substrate. In the absence of ATP, only oligopeptides shorter than five residues are hydrolyzed (such as succinyl-Leu-Tyr-|-NHMec, and Leu-Tyr-Leu-|-Tyr-Trp, in which cleavage of the -Tyr-|-Leu- and -Tyr-|-Trp bonds also occurs).. Cleaves peptides in various proteins in a process that requires ATP hydrolysis. Has a chymotrypsin-like activity. Plays a major role in the degradation of misfolded proteins. This Vibrio campbellii (strain ATCC BAA-1116) protein is ATP-dependent Clp protease proteolytic subunit.